The following is a 101-amino-acid chain: DNA-binding protein Fis (101 aa).

Positions 77-96 (QTRAANMLGINRGTLRKKLK) form a DNA-binding region, H-T-H motif.

The protein belongs to the transcriptional regulatory Fis family. In terms of assembly, homodimer.

In terms of biological role, activates ribosomal RNA transcription. Plays a direct role in upstream activation of rRNA promoters. This is DNA-binding protein Fis from Shewanella sediminis (strain HAW-EB3).